A 485-amino-acid polypeptide reads, in one-letter code: MTITPQHLIALLPLLIVGLTVVVVMLSIAWRRNHFLNATLSVIGLNAALVSLWFVGQAGAMDVTPLMRVDGFAMLYTGLVLLASLATCTFAYPWLEGYNDNQEEFYLLVLIASLGGILLANANHLAALFLGIELISLPLFGLIGYAFRQKRSLEASIKYTILSAAASSFLLFGMALVYAQSGNLSFEALGKSLGDGMLHEPLLLAGFGLMIVGLGFKLSLVPFHLWTPDVYQGAPAPVSTFLATASKIAIFGVVMRLFLYAPVGDSEAVRVVLGIIAFASIIFGNLMALSQTNIKRLLGYSSISHLGYLLVALIALQSGEMSMEAVGVYLAGYLFSSLGAFGVVSLMSSPFRGPDADSLYSYRGLFWHRPVLAAVMTVMMLSLAGIPMTLGFIGKFYVLAVGVQASLWWLVAAVVVGSAIGLYYYLRVAVSLYLHAPQQPGRDAPTNWQYSAGGIVVLISALLVLVLGVWPQPLISLVQLAMPLM.

The next 14 helical transmembrane spans lie at 8 to 28, 35 to 55, 71 to 91, 105 to 125, 127 to 147, 159 to 179, 203 to 223, 235 to 255, 271 to 291, 297 to 317, 326 to 346, 373 to 393, 408 to 430, and 455 to 475; these read LIAL…MLSI, FLNA…LWFV, GFAM…CTFA, FYLL…ANHL, ALFL…GYAF, YTIL…LVYA, LLAG…LVPF, PAPV…GVVM, VVLG…ALSQ, LLGY…IALQ, VGVY…VVSL, AAVM…LGFI, WWLV…RVAV, and IVVL…QPLI.

The protein belongs to the complex I subunit 2 family. NDH-1 is composed of 13 different subunits. Subunits NuoA, H, J, K, L, M, N constitute the membrane sector of the complex.

It is found in the cell inner membrane. The enzyme catalyses a quinone + NADH + 5 H(+)(in) = a quinol + NAD(+) + 4 H(+)(out). NDH-1 shuttles electrons from NADH, via FMN and iron-sulfur (Fe-S) centers, to quinones in the respiratory chain. The immediate electron acceptor for the enzyme in this species is believed to be ubiquinone. Couples the redox reaction to proton translocation (for every two electrons transferred, four hydrogen ions are translocated across the cytoplasmic membrane), and thus conserves the redox energy in a proton gradient. The polypeptide is NADH-quinone oxidoreductase subunit N (Salmonella typhimurium (strain LT2 / SGSC1412 / ATCC 700720)).